A 406-amino-acid chain; its full sequence is Phosphopentomutase (406 aa).

6 residues coordinate Mn(2+): aspartate 10, aspartate 305, histidine 310, aspartate 346, histidine 347, and histidine 358.

The protein belongs to the phosphopentomutase family. Mn(2+) serves as cofactor.

It is found in the cytoplasm. It carries out the reaction 2-deoxy-alpha-D-ribose 1-phosphate = 2-deoxy-D-ribose 5-phosphate. The catalysed reaction is alpha-D-ribose 1-phosphate = D-ribose 5-phosphate. It functions in the pathway carbohydrate degradation; 2-deoxy-D-ribose 1-phosphate degradation; D-glyceraldehyde 3-phosphate and acetaldehyde from 2-deoxy-alpha-D-ribose 1-phosphate: step 1/2. Isomerase that catalyzes the conversion of deoxy-ribose 1-phosphate (dRib-1-P) and ribose 1-phosphate (Rib-1-P) to deoxy-ribose 5-phosphate (dRib-5-P) and ribose 5-phosphate (Rib-5-P), respectively. This chain is Phosphopentomutase, found in Vibrio campbellii (strain ATCC BAA-1116).